A 403-amino-acid polypeptide reads, in one-letter code: Formin-like protein 21b (403 aa).

Residues 1-380 (MELLFTATLL…KAAKEAEMEK (380 aa)) form the FH2 domain. Positions 373 to 403 (AKEAEMEKTKKRVSLTNKKASGVGEEESCLI) are disordered.

This sequence belongs to the formin-like family. Class-II subfamily.

In Arabidopsis thaliana (Mouse-ear cress), this protein is Formin-like protein 21b (FH21B).